We begin with the raw amino-acid sequence, 385 residues long: Lipid-A-disaccharide synthase (385 aa).

Belongs to the LpxB family.

The enzyme catalyses 2-N,3-O-bis[(3R)-3-hydroxytetradecanoyl]-alpha-D-glucosaminyl 1-phosphate + UDP-2-N,3-O-bis[(3R)-3-hydroxytetradecanoyl]-alpha-D-glucosamine = lipid A disaccharide (E. coli) + UDP + H(+). It catalyses the reaction a lipid X + a UDP-2-N,3-O-bis[(3R)-3-hydroxyacyl]-alpha-D-glucosamine = a lipid A disaccharide + UDP + H(+). It participates in glycolipid biosynthesis; lipid IV(A) biosynthesis; lipid IV(A) from (3R)-3-hydroxytetradecanoyl-[acyl-carrier-protein] and UDP-N-acetyl-alpha-D-glucosamine: step 5/6. Condensation of UDP-2,3-diacylglucosamine and 2,3-diacylglucosamine-1-phosphate to form lipid A disaccharide, a precursor of lipid A, a phosphorylated glycolipid that anchors the lipopolysaccharide to the outer membrane of the cell. The polypeptide is Lipid-A-disaccharide synthase (Wigglesworthia glossinidia brevipalpis).